Here is a 1342-residue protein sequence, read N- to C-terminus: DNA-directed RNA polymerase subunit beta (1342 aa).

Belongs to the RNA polymerase beta chain family. In terms of assembly, the RNAP catalytic core consists of 2 alpha, 1 beta, 1 beta' and 1 omega subunit. When a sigma factor is associated with the core the holoenzyme is formed, which can initiate transcription.

The enzyme catalyses RNA(n) + a ribonucleoside 5'-triphosphate = RNA(n+1) + diphosphate. DNA-dependent RNA polymerase catalyzes the transcription of DNA into RNA using the four ribonucleoside triphosphates as substrates. The chain is DNA-directed RNA polymerase subunit beta from Aeromonas hydrophila subsp. hydrophila (strain ATCC 7966 / DSM 30187 / BCRC 13018 / CCUG 14551 / JCM 1027 / KCTC 2358 / NCIMB 9240 / NCTC 8049).